The chain runs to 312 residues: Prephenate dehydratase (312 aa).

The 192-residue stretch at 3–194 folds into the Prephenate dehydratase domain; that stretch reads GIAYLGPEGT…ARTRFVLVGR (192 aa). Residues 208-285 form the ACT domain; it reads SVVLQLDNVP…ADVRYLGSWP (78 aa). Positions 291 to 312 are disordered; it reads GAAPPPMDESASWLEGLREGRP.

Homodimer.

It carries out the reaction prephenate + H(+) = 3-phenylpyruvate + CO2 + H2O. It participates in amino-acid biosynthesis; L-phenylalanine biosynthesis; phenylpyruvate from prephenate: step 1/1. In Mycolicibacterium vanbaalenii (strain DSM 7251 / JCM 13017 / BCRC 16820 / KCTC 9966 / NRRL B-24157 / PYR-1) (Mycobacterium vanbaalenii), this protein is Prephenate dehydratase (pheA).